Consider the following 290-residue polypeptide: Nucleoid occlusion protein (290 aa).

Residues 153 to 172 (EALAQRLGKGQSTIANKLRL) constitute a DNA-binding region (H-T-H motif).

The protein belongs to the ParB family.

The protein localises to the cytoplasm. Its subcellular location is the nucleoid. Functionally, effects nucleoid occlusion by binding relatively nonspecifically to DNA and preventing the assembly of the division machinery in the vicinity of the nucleoid, especially under conditions that disturb the cell cycle. It helps to coordinate cell division and chromosome segregation by preventing the formation of the Z ring through the nucleoid, which would cause chromosome breakage. This is Nucleoid occlusion protein from Bacillus cereus (strain G9842).